We begin with the raw amino-acid sequence, 148 residues long: UPF0756 membrane protein ETA_17460 (148 aa).

The next 4 helical transmembrane spans lie at 14–34, 51–71, 80–100, and 112–132; these read ALSY…LIVI, MTVG…SGTI, FLHW…WLGG, and VVGG…GVPV.

It belongs to the UPF0756 family.

It is found in the cell membrane. This is UPF0756 membrane protein ETA_17460 from Erwinia tasmaniensis (strain DSM 17950 / CFBP 7177 / CIP 109463 / NCPPB 4357 / Et1/99).